A 408-amino-acid polypeptide reads, in one-letter code: Na(+)-translocating NADH-quinone reductase subunit F (408 aa).

The helical transmembrane segment at 4 to 24 (IYLGVGMFTIIVLVLVAIIMF) threads the bilayer. Residues 33-127 (GDVEILINDD…DMEIELPEEV (95 aa)) enclose the 2Fe-2S ferredoxin-type domain. Residues Cys-70, Cys-76, Cys-79, and Cys-111 each contribute to the [2Fe-2S] cluster site. Positions 130–270 (IRKWDCTVKS…SGPFGEFFAK (141 aa)) constitute an FAD-binding FR-type domain.

Belongs to the NqrF family. In terms of assembly, composed of six subunits; NqrA, NqrB, NqrC, NqrD, NqrE and NqrF. [2Fe-2S] cluster is required as a cofactor. The cofactor is FAD.

The protein localises to the cell inner membrane. It catalyses the reaction a ubiquinone + n Na(+)(in) + NADH + H(+) = a ubiquinol + n Na(+)(out) + NAD(+). NQR complex catalyzes the reduction of ubiquinone-1 to ubiquinol by two successive reactions, coupled with the transport of Na(+) ions from the cytoplasm to the periplasm. The first step is catalyzed by NqrF, which accepts electrons from NADH and reduces ubiquinone-1 to ubisemiquinone by a one-electron transfer pathway. The protein is Na(+)-translocating NADH-quinone reductase subunit F of Idiomarina loihiensis (strain ATCC BAA-735 / DSM 15497 / L2-TR).